The chain runs to 634 residues: Poly(ribitol-phosphate) beta-glucosyltransferase (634 aa).

It belongs to the glycosyltransferase 2 family.

It carries out the reaction 4-O-[(D-ribitylphospho)(n)-D-ribitylphospho-(2R)-glycerylphospho]-N-acetyl-beta-D-mannosaminyl-(1-&gt;4)-N-acetyl-alpha-D-glucosaminyl di-trans,octa-cis-undecaprenyl diphosphate + n UDP-alpha-D-glucose = 4-O-[(2-beta-D-glucosyl-D-ribitylphospho)(n)-D-ribitylphospho-(2R)-glycerylphospho]-N-acetyl-beta-D-mannosaminyl-(1-&gt;4)-N-acetyl-alpha-D-glucosaminyl di-trans,octa-cis-undecaprenyl diphosphate + n UDP + n H(+). The protein operates within cell wall biogenesis; poly(ribitol phosphate) teichoic acid biosynthesis. Functionally, attaches glucose residues to poly(RboP)-wall teichoic acids (WTAs). The polypeptide is Poly(ribitol-phosphate) beta-glucosyltransferase (Bacillus spizizenii (strain ATCC 23059 / NRRL B-14472 / W23) (Bacillus subtilis subsp. spizizenii)).